The sequence spans 456 residues: Choline kinase (456 aa).

It belongs to the choline/ethanolamine kinase family. In terms of assembly, monomer. Mg(2+) serves as cofactor.

The protein resides in the cytoplasm. Its subcellular location is the nucleus. It catalyses the reaction choline + ATP = phosphocholine + ADP + H(+). It functions in the pathway phospholipid metabolism; phosphatidylcholine biosynthesis; phosphocholine from choline: step 1/1. Its function is as follows. Catalyzes the committed step in the synthesis of phosphatidylcholine by the CDP-choline pathway. In Schizosaccharomyces pombe (strain 972 / ATCC 24843) (Fission yeast), this protein is Choline kinase.